The primary structure comprises 444 residues: UDP-N-acetylmuramate--L-alanine ligase (444 aa).

Residue 110 to 116 participates in ATP binding; the sequence is GAHGKTS.

This sequence belongs to the MurCDEF family.

It localises to the cytoplasm. The catalysed reaction is UDP-N-acetyl-alpha-D-muramate + L-alanine + ATP = UDP-N-acetyl-alpha-D-muramoyl-L-alanine + ADP + phosphate + H(+). The protein operates within cell wall biogenesis; peptidoglycan biosynthesis. Its function is as follows. Cell wall formation. The polypeptide is UDP-N-acetylmuramate--L-alanine ligase (Streptococcus pneumoniae (strain CGSP14)).